We begin with the raw amino-acid sequence, 210 residues long: Protein-L-isoaspartate O-methyltransferase (210 aa).

Residue Ser-60 is part of the active site.

The protein belongs to the methyltransferase superfamily. L-isoaspartyl/D-aspartyl protein methyltransferase family.

It is found in the cytoplasm. It carries out the reaction [protein]-L-isoaspartate + S-adenosyl-L-methionine = [protein]-L-isoaspartate alpha-methyl ester + S-adenosyl-L-homocysteine. Functionally, catalyzes the methyl esterification of L-isoaspartyl residues in peptides and proteins that result from spontaneous decomposition of normal L-aspartyl and L-asparaginyl residues. It plays a role in the repair and/or degradation of damaged proteins. The polypeptide is Protein-L-isoaspartate O-methyltransferase (Xylella fastidiosa (strain M12)).